Here is a 187-residue protein sequence, read N- to C-terminus: MSLINTQVQPFKVNAFHNGKFIEVTEESLKGKWSVLIFMPAAFTFNCPTEIEDAANNYGEFQKAGAEVYIVTTDTHFSHKVWHETSPAVGKAQFPLIGDPTHQLTNAFGVHIPEEGLALRGTFVINPEGVIKTVEIHSNEIARDVGETVRKLKAAQYTAAHPGEVCPAKWKEGEKTLAPSLDLVGKI.

Residues 2–157 (SLINTQVQPF…TVRKLKAAQY (156 aa)) enclose the Thioredoxin domain. Residue cysteine 47 is the Cysteine sulfenic acid (-SOH) intermediate of the active site.

The protein belongs to the peroxiredoxin family. AhpC/Prx1 subfamily. In terms of assembly, homodimer; disulfide-linked, upon oxidation. 5 homodimers assemble to form a ring-like decamer.

The protein resides in the cytoplasm. Its subcellular location is the secreted. The enzyme catalyses a hydroperoxide + NADH + H(+) = an alcohol + NAD(+) + H2O. Functionally, thiol-specific peroxidase that catalyzes the reduction of hydrogen peroxide and organic hydroperoxides to water and alcohols, respectively. Plays a role in cell protection against oxidative stress by detoxifying peroxides. The protein is Alkyl hydroperoxide reductase C (ahpC) of Pseudomonas aeruginosa (strain UCBPP-PA14).